Consider the following 273-residue polypeptide: Progestin and adipoQ receptor family member 4 (273 aa).

Transmembrane regions (helical) follow at residues 52 to 72 (IYTHGLALLGFLVLVPMTMPW), 79 to 99 (GWLGGTHCVACLAPPAGSVLY), 115 to 135 (LLALDMCGVCLVNTLGALPII), 147 to 167 (PAALVGYTVLSGVAGWRALTA), 185 to 205 (LLVFGARGVGLGSGAPGSLPC), and 245 to 265 (LLSVGSILQLHAGVVPDLLWA).

The protein belongs to the ADIPOR family. In terms of assembly, interacts with CERS2 and CERS5; the interaction regulates CERS2 and CERS5 stabilities and activities and is inhibited in presence of ceramides. In terms of tissue distribution, relatively widely expressed in a range of tissues. Expressed in subcutaneous white adipose tissue.

The protein resides in the golgi apparatus membrane. Its function is as follows. Plays a role in maintaining adipose tissue function through the regulation of ceramide levels. Mediates the stability of ceramide synthetases, CERS2 and CERS5, and their activities. This is Progestin and adipoQ receptor family member 4 from Homo sapiens (Human).